We begin with the raw amino-acid sequence, 173 residues long: Probable DNA-directed RNA polymerase subunit delta (173 aa).

In terms of domain architecture, HTH HARE-type spans 14-81; the sequence is LSMIELGVKI…GSGMWGLKRW (68 aa). The disordered stretch occupies residues 86–173; that stretch reads QAEEEITEEP…EDENDDDNTR (88 aa). Residues 109–173 show a composition bias toward acidic residues; it reads IDDVDDDLDV…EDENDDDNTR (65 aa).

This sequence belongs to the RpoE family. As to quaternary structure, RNAP is composed of a core of 2 alpha, a beta and a beta' subunits. The core is associated with a delta subunit and one of several sigma factors.

In terms of biological role, participates in both the initiation and recycling phases of transcription. In the presence of the delta subunit, RNAP displays an increased specificity of transcription, a decreased affinity for nucleic acids, and an increased efficiency of RNA synthesis because of enhanced recycling. In Oceanobacillus iheyensis (strain DSM 14371 / CIP 107618 / JCM 11309 / KCTC 3954 / HTE831), this protein is Probable DNA-directed RNA polymerase subunit delta.